A 159-amino-acid chain; its full sequence is tRNA-specific adenosine deaminase (159 aa).

Positions 6 to 133 (EEQTYFMQEA…ERLNHRVQVE (128 aa)) constitute a CMP/dCMP-type deaminase domain. H57 is a binding site for Zn(2+). E59 functions as the Proton donor in the catalytic mechanism. Residues C87 and C90 each contribute to the Zn(2+) site.

Belongs to the cytidine and deoxycytidylate deaminase family. As to quaternary structure, homodimer. It depends on Zn(2+) as a cofactor.

The catalysed reaction is adenosine(34) in tRNA + H2O + H(+) = inosine(34) in tRNA + NH4(+). Functionally, catalyzes the deamination of adenosine to inosine at the wobble position 34 of tRNA(Arg2). The protein is tRNA-specific adenosine deaminase of Streptococcus pyogenes serotype M18 (strain MGAS8232).